The primary structure comprises 400 residues: Lipase member N (400 aa).

Residues 1–19 form the signal peptide; that stretch reads MPMMWLFLTTACLIPGTLS. An AB hydrolase-1 domain is found at 81-381; that stretch reads PVVYMQHALF…DWNHFDFVWG (301 aa). Serine 175 serves as the catalytic Nucleophile. A disulfide bridge links cysteine 249 with cysteine 258. The N-linked (GlcNAc...) asparagine glycan is linked to asparagine 274. Catalysis depends on charge relay system residues aspartate 346 and histidine 375.

It belongs to the AB hydrolase superfamily. Lipase family. In terms of tissue distribution, highly expressed in the epidermis. Also detected in other tissues, although at much lower levels, including liver and kidney.

It localises to the secreted. The catalysed reaction is a sterol ester + H2O = a sterol + a fatty acid + H(+). It catalyses the reaction a triacylglycerol + H2O = a 1,2-diacylglycerol + a fatty acid + H(+). The enzyme catalyses a triacylglycerol + H2O = a diacylglycerol + a fatty acid + H(+). It carries out the reaction a cholesterol ester + H2O = cholesterol + a fatty acid + H(+). Functionally, plays a highly specific role in the last step of keratinocyte differentiation. Contains two distinct domains: the alpha/beta hydrolase fold and the abhydrolase-associated lipase region, also features the consensus sequence of the active site of a genuine lipase. May have an essential function in lipid metabolism of the most differentiated epidermal layers. This is Lipase member N (Lipn) from Mus musculus (Mouse).